The primary structure comprises 249 residues: Methionine aminopeptidase (249 aa).

His77 is a substrate binding site. A divalent metal cation contacts are provided by Asp94, Asp105, and His168. His175 is a binding site for substrate. Positions 201 and 232 each coordinate a divalent metal cation.

This sequence belongs to the peptidase M24A family. Methionine aminopeptidase type 1 subfamily. As to quaternary structure, monomer. It depends on Co(2+) as a cofactor. Requires Zn(2+) as cofactor. The cofactor is Mn(2+). Fe(2+) is required as a cofactor.

It catalyses the reaction Release of N-terminal amino acids, preferentially methionine, from peptides and arylamides.. Removes the N-terminal methionine from nascent proteins. The N-terminal methionine is often cleaved when the second residue in the primary sequence is small and uncharged (Met-Ala-, Cys, Gly, Pro, Ser, Thr, or Val). Requires deformylation of the N(alpha)-formylated initiator methionine before it can be hydrolyzed. In Clostridium perfringens (strain 13 / Type A), this protein is Methionine aminopeptidase.